We begin with the raw amino-acid sequence, 82 residues long: Small ribosomal subunit protein bS16 (82 aa).

Belongs to the bacterial ribosomal protein bS16 family.

In Saccharophagus degradans (strain 2-40 / ATCC 43961 / DSM 17024), this protein is Small ribosomal subunit protein bS16.